We begin with the raw amino-acid sequence, 201 residues long: Ribonuclease HII (201 aa).

In terms of domain architecture, RNase H type-2 spans 12 to 201 (DLVAGVDEVG…VRELLDVPVQ (190 aa)). A divalent metal cation-binding residues include Asp-18, Glu-19, and Asp-110.

Belongs to the RNase HII family. Mn(2+) serves as cofactor. The cofactor is Mg(2+).

It is found in the cytoplasm. It catalyses the reaction Endonucleolytic cleavage to 5'-phosphomonoester.. Endonuclease that specifically degrades the RNA of RNA-DNA hybrids. This chain is Ribonuclease HII, found in Pseudomonas aeruginosa (strain UCBPP-PA14).